The sequence spans 482 residues: UDP-glycosyltransferase 1 (482 aa).

Asn-243 carries N-linked (GlcNAc...) asparagine glycosylation. The chain crosses the membrane as a helical span at residues 450 to 470 (IYLVYALVLGSAWWIGKTILG).

The protein belongs to the glycosyltransferase 28 family.

It is found in the membrane. The catalysed reaction is exophillate aglycone + UDP-alpha-D-glucose = exophillate + UDP + H(+). The protein operates within secondary metabolite biosynthesis. Its function is as follows. Acts as a depside 2-O-glucosyltransferase that catalyzes the first glycosylation step during phaeomoniecin D biosynthesis by producing the intermediate exophillic acid which is further O-galactosylated into phaeomoniecin D by the C-galactosyltransferase OGT2. The chain is UDP-glycosyltransferase 1 from Phaeomoniella chlamydospora (Phaeoacremonium chlamydosporum).